The sequence spans 368 residues: 2-deoxy-scyllo-inosose synthase (368 aa).

NAD(+)-binding positions include D42, 72-75 (EEYK), 104-108 (GLTGN), 128-129 (TT), 139-141 (SIK), 150-151 (KN), and Q176. The active site involves K141. E183 lines the Co(2+) pocket. Residue E243 is part of the active site. Co(2+) contacts are provided by H246 and H262.

This sequence belongs to the sugar phosphate cyclases superfamily. DOI synthase family. Was isolated as a heterodimeric enzyme comprising of BtrC and a smaller polypeptide further identified as PdxT by sequence homology. Homodimer in solution. NAD(+) serves as cofactor. The cofactor is Co(2+).

It catalyses the reaction D-glucose 6-phosphate = 2-deoxy-L-scyllo-inosose + phosphate. Its pathway is metabolic intermediate biosynthesis; 2-deoxystreptamine biosynthesis; 2-deoxystreptamine from D-glucose 6-phosphate: step 1/4. It functions in the pathway antibiotic biosynthesis; butirosin biosynthesis. With respect to regulation, strongly inhibited by EDTA, zinc and Cu(2+). Catalyzes the intramolecular carbocycle formation from D-glucose-6-phosphate to 2-deoxy-scyllo-inosose (DOI). The protein is 2-deoxy-scyllo-inosose synthase (btrC) of Niallia circulans (Bacillus circulans).